A 1127-amino-acid chain; its full sequence is Structural protein MDM1 (1127 aa).

The PXA domain maps to 85-273 (NAQIGKELES…WNLRIVSLSQ (189 aa)). Phosphoserine is present on residues serine 670, serine 673, and serine 692. A coiled-coil region spans residues 705-762 (SNNFRDNIASLTISIDQIEKELELLRHLILKADLTNNQMQLKILKKSQRTLLKELEMK). Residues 782-905 (TKIYIRSYFS…RFLTDPTPFK (124 aa)) enclose the PX domain.

It belongs to the sorting nexin family.

It localises to the cytoplasm. Its function is as follows. Essential for mitotic growth. Mediates organelle inheritance. The protein is Structural protein MDM1 (MDM1) of Saccharomyces cerevisiae (strain ATCC 204508 / S288c) (Baker's yeast).